The primary structure comprises 289 residues: Kinetochore-associated protein MTW1 (289 aa).

Residues 105 to 147 (RLENQKDLVIVDENELKKSEEKLREKVNDVELAFKKNEMLLKR) adopt a coiled-coil conformation.

It belongs to the mis12 family. As to quaternary structure, component of the MIND kinetochore complex, which is composed of at least MTW1, NNF1, NSL1 and DSN1.

The protein resides in the chromosome. It localises to the centromere. It is found in the kinetochore. Its subcellular location is the cytoplasm. The protein localises to the cytoskeleton. The protein resides in the spindle pole. Its function is as follows. Acts as an essential component of the kinetochore MIND complex, which is required for the spindle checkpoint and kinetochore integrity. MIND plays a role in establishing a bipolar spindle-kinetochore interaction by joining kinetochore subunits contacting DNA to those contacting microtubules. This is Kinetochore-associated protein MTW1 (MTW1) from Saccharomyces cerevisiae (strain ATCC 204508 / S288c) (Baker's yeast).